A 319-amino-acid chain; its full sequence is Methionyl-tRNA formyltransferase (319 aa).

Position 116 to 119 (116 to 119) interacts with (6S)-5,6,7,8-tetrahydrofolate; it reads SLLP.

Belongs to the Fmt family.

It carries out the reaction L-methionyl-tRNA(fMet) + (6R)-10-formyltetrahydrofolate = N-formyl-L-methionyl-tRNA(fMet) + (6S)-5,6,7,8-tetrahydrofolate + H(+). Its function is as follows. Attaches a formyl group to the free amino group of methionyl-tRNA(fMet). The formyl group appears to play a dual role in the initiator identity of N-formylmethionyl-tRNA by promoting its recognition by IF2 and preventing the misappropriation of this tRNA by the elongation apparatus. The polypeptide is Methionyl-tRNA formyltransferase (Treponema pallidum (strain Nichols)).